Consider the following 1460-residue polypeptide: CLIP-associating protein 1-A (1460 aa).

HEAT repeat units lie at residues 87–124 (TQLGTVLPSLMDRLGDAKDSVREQDQSLLIKIMEQASN) and 163–200 (LTLSKIVPHICNLLGDPNSQVRDAAINCLVEIYRHVGE). A disordered region spans residues 237–293 (SDKNFDDEDSVDGNRPSSASSSASSKAPQTARRGVSLGTARRPGPSSAAAKTGGTAK). Over residues 279-293 (PGPSSAAAKTGGTAK) the composition is skewed to low complexity. HEAT repeat units lie at residues 407 to 442 (HGAEAIMPTVFNLVPNSAKIMATSGIVAIRLIIRHT) and 443 to 479 (HVPRLIPIITSNCTSKSVAVRRRCYDFLDLLLQEWQT). Disordered stretches follow at residues 545-605 (SDSI…IDVN), 640-733 (IRTR…RFGI), and 778-800 (PYGMYSDDDANSDASSACSERSY). Residues 550-569 (SLPQSDRSSSSSQESLNRPL) show a composition bias toward low complexity. A compositionally biased stretch (polar residues) spans 571–597 (TKRSPTGSTVSRASSTTSKSTPGSLQR). Residues 645 to 659 (QSSGSTTSTASTPAD) are compositionally biased toward low complexity. 2 stretches are compositionally biased toward polar residues: residues 669 to 681 (VSQSQPGSRSNSP) and 715 to 724 (QGCSRETSPS). A compositionally biased stretch (low complexity) spans 789–800 (SDASSACSERSY). The HEAT 5 repeat unit spans residues 942 to 979 (FIVDQTQTPNLKVKVAILKYIESLARQMDPTDFVNSSE). The interval 1041 to 1084 (LKNSSNSSMGSPSNTIGRTPSRHSSSRASPLTSPTNCSHGGLSP) is disordered. A compositionally biased stretch (low complexity) spans 1042–1054 (KNSSNSSMGSPSN). Residues 1066–1078 (SRASPLTSPTNCS) are compositionally biased toward polar residues. HEAT repeat units lie at residues 1272–1309 (LLLETLGDKDHAIRALALRVLREILRNQPARFKNYAEL) and 1390–1427 (GLLQGYDNTESSVRKASVFCLVAIYSVIGEELKPYLAQ).

It belongs to the CLASP family.

It localises to the cytoplasm. It is found in the cytoskeleton. Its subcellular location is the microtubule organizing center. The protein localises to the centrosome. The protein resides in the chromosome. It localises to the centromere. It is found in the kinetochore. Its subcellular location is the spindle. The protein localises to the golgi apparatus. The protein resides in the trans-Golgi network. In terms of biological role, microtubule plus-end tracking protein that promotes the stabilization of dynamic microtubules during anaphase. Plays a crucial role in chromatin-induced microtubule formation. May also act at microtubule minus ends. May be involved in the nucleation of noncentrosomal microtubules originating from the trans-Golgi network (TGN). This chain is CLIP-associating protein 1-A (clasp1-a), found in Xenopus laevis (African clawed frog).